We begin with the raw amino-acid sequence, 783 residues long: Rho GTPase-activating protein gacR (783 aa).

The stretch at 138 to 188 forms a coiled coil; it reads AKNRFDKARLSFDEASEQFKQLRKKQNNINNEKLLEAEEDLDYATQQFSDI. Residues 262–299 form a disordered region; it reads QFEQTNSSRTISLPPPPPPKPTSSTPSSSPSPSPSSSI. The span at 283–299 shows a compositional bias: low complexity; the sequence is TSSTPSSSPSPSPSSSI. One can recognise a Rho-GAP domain in the interval 319–509; sequence MALSTITERE…FIISNFNNIF (191 aa). Positions 527-539 are enriched in gly residues; sequence GSSGGGGGGGSSG. Residues 527–745 are disordered; it reads GSSGGGGGGG…TTNSRPLSNS (219 aa). 4 stretches are compositionally biased toward low complexity: residues 568–589, 599–630, 641–651, and 661–698; these read SVNTSSSQSSSSSSSSSFASSA, PSSSSSPIITTTSPNSNTNINSNTSVNTNINP, PKKISSSSNSL, and SIPEKSQNNITPTILSSSLSAPTSPTTTTTTNPLRSST. Over residues 706 to 738 the composition is skewed to polar residues; the sequence is NRVSMYLQNSNTGVPLPSQKPQRVISNNNTTTN.

The protein resides in the cytoplasm. In terms of biological role, rho GTPase-activating protein involved in the signal transduction pathway. This chain is Rho GTPase-activating protein gacR (gacR), found in Dictyostelium discoideum (Social amoeba).